The primary structure comprises 566 residues: Proline--tRNA ligase (566 aa).

It belongs to the class-II aminoacyl-tRNA synthetase family. ProS type 1 subfamily. As to quaternary structure, homodimer.

It is found in the cytoplasm. It catalyses the reaction tRNA(Pro) + L-proline + ATP = L-prolyl-tRNA(Pro) + AMP + diphosphate. Catalyzes the attachment of proline to tRNA(Pro) in a two-step reaction: proline is first activated by ATP to form Pro-AMP and then transferred to the acceptor end of tRNA(Pro). As ProRS can inadvertently accommodate and process non-cognate amino acids such as alanine and cysteine, to avoid such errors it has two additional distinct editing activities against alanine. One activity is designated as 'pretransfer' editing and involves the tRNA(Pro)-independent hydrolysis of activated Ala-AMP. The other activity is designated 'posttransfer' editing and involves deacylation of mischarged Ala-tRNA(Pro). The misacylated Cys-tRNA(Pro) is not edited by ProRS. The polypeptide is Proline--tRNA ligase (Exiguobacterium sibiricum (strain DSM 17290 / CCUG 55495 / CIP 109462 / JCM 13490 / 255-15)).